A 621-amino-acid polypeptide reads, in one-letter code: GPI-anchor transamidase component GPAA1 (621 aa).

Topologically, residues 2–19 (GLLSDPVRRRALARLVLR) are cytoplasmic. A helical transmembrane segment spans residues 20–41 (LNAPLCVLSYVAGIAWFLALVF). At 42-370 (PPLTQRTYMS…LLPGLSRFVS (329 aa)) the chain is on the lumenal side. 2 residues coordinate a 2-acyl-6-[6-phosphoethanolamine-alpha-D-mannosyl-(1-&gt;2)-6-phosphoethanolamine-alpha-D-mannosyl-(1-&gt;6)-2-phosphoethanolamine-alpha-D-mannosyl-(1-&gt;4)-alpha-D-glucosaminyl]-1-(1-radyl,2-acyl-sn-glycero-3-phospho)-1D-myo-inositol: Tyr49 and Ser51. Asn203 is a glycosylation site (N-linked (GlcNAc...) asparagine). Cys259 and Cys266 are oxidised to a cystine. 3 residues coordinate a 2-acyl-6-[6-phosphoethanolamine-alpha-D-mannosyl-(1-&gt;2)-6-phosphoethanolamine-alpha-D-mannosyl-(1-&gt;6)-2-phosphoethanolamine-alpha-D-mannosyl-(1-&gt;4)-alpha-D-glucosaminyl]-1-(1-radyl,2-acyl-sn-glycero-3-phospho)-1D-myo-inositol: His354, Gln355, and Ser356. Gln355 provides a ligand contact to Mg(2+). The chain crosses the membrane as a helical span at residues 371–393 (IGLYMPAVGFLLLVLGLKALELW). At 394-425 (MQLHEAGMGLEEPGGAPGPSVPLPPSQGVGLA) the chain is on the cytoplasmic side. The chain crosses the membrane as a helical span at residues 426–450 (SLVAPLLISQAMGLALYVLPVLGQH). Topologically, residues 451–462 (VATQHFPVAEAE) are lumenal. Residues 463 to 483 (AVVLTLLAIYAAGLALPHNTH) traverse the membrane as a helical segment. Topologically, residues 484–495 (RVVSTQAPDRGW) are cytoplasmic. The next 2 membrane-spanning stretches (helical) occupy residues 496 to 519 (MALK…TNFS) and 520 to 536 (LGFL…ALAK). Residues 537–540 (PHGP) are Cytoplasmic-facing. Residues 541–563 (RTLYAALLVLTSPAATLLGSLFL) form a helical membrane-spanning segment. At 564-597 (WRELQEAPLSLAEGWQLFLAALAQGVLEHHTYGA) the chain is on the lumenal side. Residues 598-619 (LLFPLLSLGLYPCWLLFWNVLF) form a helical membrane-spanning segment. Residues 620–621 (WK) lie on the Cytoplasmic side of the membrane.

As to quaternary structure, heteropentamer. Part of the GPI-anchor transamidase complex, consisting of PIGK, PIGT, PIGS, PIGU and GAA1. Interacts with PIGK. Ubiquitously expressed in fetal and adult tissues. Expressed at higher levels in fetal tissues than adult tissues.

Its subcellular location is the endoplasmic reticulum membrane. Its pathway is glycolipid biosynthesis; glycosylphosphatidylinositol-anchor biosynthesis. Component of the glycosylphosphatidylinositol-anchor (GPI-anchor) transamidase (GPI-T) complex that catalyzes the formation of the linkage between a proprotein and a GPI-anchor and participates in GPI anchored protein biosynthesis. Binds GPI-anchor. In Homo sapiens (Human), this protein is GPI-anchor transamidase component GPAA1.